Consider the following 240-residue polypeptide: Ditrans,polycis-undecaprenyl-diphosphate synthase ((2E,6E)-farnesyl-diphosphate specific) (240 aa).

Asp18 is an active-site residue. Asp18 is a Mg(2+) binding site. Substrate contacts are provided by residues 19-22, Trp23, Arg31, His35, and 63-65; these read GNGR and SSE. Asn66 serves as the catalytic Proton acceptor. Substrate contacts are provided by residues Trp67, Arg69, Arg186, and 192–194; that span reads RIS. Position 205 (Glu205) interacts with Mg(2+).

This sequence belongs to the UPP synthase family. As to quaternary structure, homodimer. The cofactor is Mg(2+).

The enzyme catalyses 8 isopentenyl diphosphate + (2E,6E)-farnesyl diphosphate = di-trans,octa-cis-undecaprenyl diphosphate + 8 diphosphate. Catalyzes the sequential condensation of isopentenyl diphosphate (IPP) with (2E,6E)-farnesyl diphosphate (E,E-FPP) to yield (2Z,6Z,10Z,14Z,18Z,22Z,26Z,30Z,34E,38E)-undecaprenyl diphosphate (di-trans,octa-cis-UPP). UPP is the precursor of glycosyl carrier lipid in the biosynthesis of bacterial cell wall polysaccharide components such as peptidoglycan and lipopolysaccharide. The sequence is that of Ditrans,polycis-undecaprenyl-diphosphate synthase ((2E,6E)-farnesyl-diphosphate specific) from Pasteurella multocida (strain Pm70).